Reading from the N-terminus, the 225-residue chain is Cytidylate kinase (225 aa).

Position 11 to 19 (11 to 19 (GPAGVGKST)) interacts with ATP.

Belongs to the cytidylate kinase family. Type 1 subfamily.

Its subcellular location is the cytoplasm. It carries out the reaction CMP + ATP = CDP + ADP. The enzyme catalyses dCMP + ATP = dCDP + ADP. The chain is Cytidylate kinase from Lawsonia intracellularis (strain PHE/MN1-00).